Here is a 356-residue protein sequence, read N- to C-terminus: MSEERKVALITGITGQDGSYLTEFLISKGYYVHGIIQKIFHHFNTIVKNIYIKIDMLKEKESLTLHYGDLTDASNLHSIVSKVNPTEIYNLGAQSHVKVSFDMSEYTGDVDGLGCLRLLDAIRSCGMEKKVKYYQASTSELYGKVQEIPQSETTPFYPRSPYAVAKQYAYWIVVNYREAYDMYACNGILFNHESPRRGPTFVTRKITRFVAGIACGRDEILYLGNINAKRDWGHARDYVEAMWLMLQQEKPEDFVIATGETHSVREFVEKSFKEIDIIIKWRGEAEKEEGYCEKTGKVYVKIDEKYYRPTEVDLLLGNPNKAKKLLQWQIKTSFGELVKEMVAKDIEYIKNGDKYN.

NADP(+)-binding positions include 12 to 17 (GITGQD), 69 to 70 (DL), 91 to 95 (LGAQS), and Tyr-106. Residue Thr-138 is part of the active site. Catalysis depends on nucleophile residues Glu-140 and Tyr-162. The NADP(+) site is built by Lys-166, His-192, and Arg-197.

The protein belongs to the NAD(P)-dependent epimerase/dehydratase family. GDP-mannose 4,6-dehydratase subfamily. The cofactor is NADP(+).

The enzyme catalyses GDP-alpha-D-mannose = GDP-4-dehydro-alpha-D-rhamnose + H2O. It functions in the pathway nucleotide-sugar biosynthesis; GDP-L-fucose biosynthesis via de novo pathway; GDP-L-fucose from GDP-alpha-D-mannose: step 1/2. Its function is as follows. Participates in the synthesis of GDP-L-fucose, catalyzing the conversion of GDP-D-mannose to GDP-4-dehydro-6-deoxy-D-mannose (GDP-4-dehydro-alpha-D-rhamnose) which is further catalyzed by GDP-L-fucose synthase (ger). GDP-L-fucose is important for the synthesis of fucosylated N-glycans which are expressed on the cell surface. The sequence is that of GDP-mannose 4,6 dehydratase (gmd) from Dictyostelium discoideum (Social amoeba).